A 448-amino-acid polypeptide reads, in one-letter code: Late embryogenesis abundant protein ECP63 (448 aa).

2 stretches are compositionally biased toward basic and acidic residues: residues 282 to 326 and 334 to 354; these read TEEA…EEAG and QKTRESTESGAQKAEETKDSA. 2 disordered regions span residues 282–360 and 411–448; these read TEEA…RGNE and SKPGKVATSLKASDQMTGQTFNDVGRMDDDARKDKGKL. Positions 297-331 form a coiled coil; sequence KENMEKAGEVTRQKMEEMRLEGKELKEEAGAKAQE. Polar residues predominate over residues 420-432; it reads LKASDQMTGQTFN. A compositionally biased stretch (basic and acidic residues) spans 435–448; that stretch reads GRMDDDARKDKGKL.

Belongs to the LEA type 4 family. In terms of tissue distribution, expressed in mature seeds.

May be involved in the BHLH109-mediated regulation of somatic embryogenesis. The chain is Late embryogenesis abundant protein ECP63 from Arabidopsis thaliana (Mouse-ear cress).